The sequence spans 277 residues: Alpha-ketoglutarate-dependent dioxygenase tstK (277 aa).

The protein belongs to the asaB hydroxylase/desaturase family.

The enzyme catalyses 2-[(1R,8S,14R,15R)-11-hydroxy-14,15-bis[(6E)-oct-6-en-1-yl]-3,5,9-trioxo-4,10-dioxatetracyclo[9.4.0.0(2,6).0(8,12)]pentadeca-2(6),12-dien-8-yl]acetate + 3 2-oxoglutarate + 3 O2 = phomoidride A + 3 succinate + 3 CO2 + H2O. In terms of biological role, alpha-ketoglutarate-dependent dioxygenase; part of the gene cluster that mediates the biosynthesis of the antihypercholesterolemic agents phomoidrides which are dimeric anhydrides. Within the pathway, tstK is responsible for the iterative oxidation necessary to convert prephomoidride to phomoidride A. The pathway begins with the highly reducing polyketide synthase tstiA that catalyzes the formation of a C12-fatty acyl-ACP, starting from one acetate and 5 malonate units. The hydrolase tstM is involved in the release of the C12-fatty acyl chain from phiA. The alkylcitrate synthase (ACS) tstJ and the alkylcitrate dehydratase (ACDH) tstI then give rise to decarboxylated monomeric anhydrides by coupling the C12-fatty acyl chain with oxalacetic acid. The cyclase tstC is responsible for the dimerization of the monomeric anhydrides which leads to the production of prephomoidride that contains the characteristic bicyclo[4.3.1]deca-1,6-diene system of phomoidrides. Iterative oxidation catalyzed by the alpha-ketoglutarate-dependent dioxygenase tstK produced then phomoidride A. Finally, the methyltransferase tstE converts phomoidride A to phomoidride B via an acetalization reaction. The phosphatidylethanolamine-binding protein tstB and tstN are not essential for dimerization and their functions have still to be determined. This is Alpha-ketoglutarate-dependent dioxygenase tstK from Talaromyces stipitatus (strain ATCC 10500 / CBS 375.48 / QM 6759 / NRRL 1006) (Penicillium stipitatum).